The sequence spans 505 residues: Ribose import ATP-binding protein RbsA 1 (505 aa).

2 ABC transporter domains span residues 13–249 (LALR…VGRD) and 254–503 (YPKQ…TGRA). 45-52 (GENGAGKS) contacts ATP.

This sequence belongs to the ABC transporter superfamily. Ribose importer (TC 3.A.1.2.1) family. In terms of assembly, the complex is composed of an ATP-binding protein (RbsA), two transmembrane proteins (RbsC) and a solute-binding protein (RbsB).

The protein localises to the cell membrane. The enzyme catalyses D-ribose(out) + ATP + H2O = D-ribose(in) + ADP + phosphate + H(+). In terms of biological role, part of the ABC transporter complex RbsABC involved in ribose import. Responsible for energy coupling to the transport system. The polypeptide is Ribose import ATP-binding protein RbsA 1 (Streptomyces coelicolor (strain ATCC BAA-471 / A3(2) / M145)).